The following is a 367-amino-acid chain: Chorismate synthase (367 aa).

Arg48 and Arg54 together coordinate NADP(+). Residues 125 to 127 (RSS), 238 to 239 (NA), Gly278, 293 to 297 (KPTSS), and Arg319 each bind FMN.

It belongs to the chorismate synthase family. As to quaternary structure, homotetramer. It depends on FMNH2 as a cofactor.

It carries out the reaction 5-O-(1-carboxyvinyl)-3-phosphoshikimate = chorismate + phosphate. The protein operates within metabolic intermediate biosynthesis; chorismate biosynthesis; chorismate from D-erythrose 4-phosphate and phosphoenolpyruvate: step 7/7. Catalyzes the anti-1,4-elimination of the C-3 phosphate and the C-6 proR hydrogen from 5-enolpyruvylshikimate-3-phosphate (EPSP) to yield chorismate, which is the branch point compound that serves as the starting substrate for the three terminal pathways of aromatic amino acid biosynthesis. This reaction introduces a second double bond into the aromatic ring system. The polypeptide is Chorismate synthase (Xanthomonas campestris pv. campestris (strain 8004)).